The primary structure comprises 236 residues: Small ribosomal subunit protein uS2c (236 aa).

It belongs to the universal ribosomal protein uS2 family.

Its subcellular location is the plastid. The protein resides in the chloroplast. The sequence is that of Small ribosomal subunit protein uS2c (rps2) from Carica papaya (Papaya).